The sequence spans 433 residues: Putative ankyrin repeat protein R784 (433 aa).

ANK repeat units follow at residues 44–70 (NQNL…KTDV), 71–101 (NGLK…NNDL), 102–131 (LDLH…IVII), 179–205 (FYDS…NQCS), 206–235 (VRQK…RIFS), 237–264 (RRLI…IDLA), 265–294 (QNNF…DIHF), 296–321 (NGEC…NKVY), 322–351 (MSEK…ACMS), and 380–409 (NMRK…KLRE).

The sequence is that of Putative ankyrin repeat protein R784 from Acanthamoeba polyphaga mimivirus (APMV).